The following is a 253-amino-acid chain: Ferritin-2, chloroplastic (253 aa).

A chloroplast-targeting transit peptide spans 1–45; that stretch reads MLHKASPALSLLSSGYTGGGNLFPPSRNSSNLLFSPSGSRFSVQA. The segment at 46–82 is extension peptide (EP); the sequence is AKGTNTKSLTGVVFEPFEEVKKEMELVPTTPFVSLAR. Residues 83-236 form the Ferritin-like diiron domain; the sequence is HKFSDDSESA…EYVAQLRRIG (154 aa). Positions 100, 135, 138, 184, and 218 each coordinate Fe cation.

This sequence belongs to the ferritin family. As to quaternary structure, oligomer of 24 subunits. There are two types of subunits: L (light) chain and H (heavy) chain. The major chain can be light or heavy, depending on the species and tissue type. The functional molecule forms a roughly spherical shell with a diameter of 12 nm and contains a central cavity into which the insoluble mineral iron core is deposited.

Its subcellular location is the plastid. It localises to the chloroplast. It catalyses the reaction 4 Fe(2+) + O2 + 4 H(+) = 4 Fe(3+) + 2 H2O. Its function is as follows. Stores iron in a soluble, non-toxic, readily available form. Important for iron homeostasis. Has ferroxidase activity. Iron is taken up in the ferrous form and deposited as ferric hydroxides after oxidation. In Arabidopsis thaliana (Mouse-ear cress), this protein is Ferritin-2, chloroplastic (FER2).